Consider the following 340-residue polypeptide: Ketol-acid reductoisomerase (NADP(+)) (340 aa).

Positions 3–183 (VSIYYDKDCD…GGGRTGIIET (181 aa)) constitute a KARI N-terminal Rossmann domain. NADP(+) contacts are provided by residues 26 to 29 (FGSQ), Lys49, Ser54, and 84 to 87 (DEIQ). His109 is an active-site residue. NADP(+) is bound at residue Gly135. The KARI C-terminal knotted domain occupies 184-329 (TFKAETETDL…RELRAMMPWI (146 aa)). Asp192, Glu196, Glu228, and Glu232 together coordinate Mg(2+). Ser253 contributes to the substrate binding site.

The protein belongs to the ketol-acid reductoisomerase family. Mg(2+) is required as a cofactor.

It carries out the reaction (2R)-2,3-dihydroxy-3-methylbutanoate + NADP(+) = (2S)-2-acetolactate + NADPH + H(+). The catalysed reaction is (2R,3R)-2,3-dihydroxy-3-methylpentanoate + NADP(+) = (S)-2-ethyl-2-hydroxy-3-oxobutanoate + NADPH + H(+). It functions in the pathway amino-acid biosynthesis; L-isoleucine biosynthesis; L-isoleucine from 2-oxobutanoate: step 2/4. Its pathway is amino-acid biosynthesis; L-valine biosynthesis; L-valine from pyruvate: step 2/4. In terms of biological role, involved in the biosynthesis of branched-chain amino acids (BCAA). Catalyzes an alkyl-migration followed by a ketol-acid reduction of (S)-2-acetolactate (S2AL) to yield (R)-2,3-dihydroxy-isovalerate. In the isomerase reaction, S2AL is rearranged via a Mg-dependent methyl migration to produce 3-hydroxy-3-methyl-2-ketobutyrate (HMKB). In the reductase reaction, this 2-ketoacid undergoes a metal-dependent reduction by NADPH to yield (R)-2,3-dihydroxy-isovalerate. In Campylobacter lari (strain RM2100 / D67 / ATCC BAA-1060), this protein is Ketol-acid reductoisomerase (NADP(+)).